Consider the following 123-residue polypeptide: Holo-[acyl-carrier-protein] synthase (123 aa).

Mg(2+) contacts are provided by Asp-8 and Glu-60.

The protein belongs to the P-Pant transferase superfamily. AcpS family. Requires Mg(2+) as cofactor.

It localises to the cytoplasm. It carries out the reaction apo-[ACP] + CoA = holo-[ACP] + adenosine 3',5'-bisphosphate + H(+). Its function is as follows. Transfers the 4'-phosphopantetheine moiety from coenzyme A to a Ser of acyl-carrier-protein. This is Holo-[acyl-carrier-protein] synthase from Ehrlichia ruminantium (strain Gardel).